Consider the following 167-residue polypeptide: NADH-ubiquinone oxidoreductase chain 6 (167 aa).

4 helical membrane-spanning segments follow: residues 21–41 (SPYY…LLLL), 45–65 (IIFP…VVFI), 78–98 (PINL…ITMI), and 132–152 (SMFI…LEVV).

Belongs to the complex I subunit 6 family.

The protein resides in the mitochondrion membrane. The catalysed reaction is a ubiquinone + NADH + 5 H(+)(in) = a ubiquinol + NAD(+) + 4 H(+)(out). Core subunit of the mitochondrial membrane respiratory chain NADH dehydrogenase (Complex I) that is believed to belong to the minimal assembly required for catalysis. Complex I functions in the transfer of electrons from NADH to the respiratory chain. The immediate electron acceptor for the enzyme is believed to be ubiquinone. This chain is NADH-ubiquinone oxidoreductase chain 6 (ND6), found in Branchiostoma floridae (Florida lancelet).